The chain runs to 431 residues: Putative helicase 055L (431 aa).

Residues 73-222 (WGHVTSKGYC…ALGAFFGRED (150 aa)) enclose the Helicase ATP-binding domain. An ATP-binding site is contributed by 86–93 (CPPGFGKT). The short motif at 175–178 (DEAH) is the DEAH box element. A disordered region spans residues 403–431 (KCDASRPSQSTPTPTGSSQPAPRTRRPQR). Over residues 407–424 (SRPSQSTPTPTGSSQPAP) the composition is skewed to low complexity.

This is Putative helicase 055L from Frog virus 3 (isolate Goorha) (FV-3).